We begin with the raw amino-acid sequence, 1107 residues long: Voltage-gated delayed rectifier potassium channel KCNH8 (1107 aa).

Topologically, residues 1–225 (MPVMKGLLAP…HFSTFKAGWD (225 aa)) are cytoplasmic. The 73-residue stretch at 18–90 (IATRFDGTHS…LQIEKSLEEK (73 aa)) folds into the PAS domain. In terms of domain architecture, PAC spans 93–145 (FKGEIMFYKKNGSPFWCLLDIVPIKNEKGDVVLFLASFKDITDTKVKITPEDK). The chain crosses the membrane as a helical span at residues 226-246 (WLILLATFYVAVTVPYNVCFI). Residues 247–255 (GNDDLSTTR) are Extracellular-facing. Residues 256 to 276 (STTVSDIAVEILFIIDIILNF) form a helical membrane-spanning segment. The Cytoplasmic segment spans residues 277–298 (RTTYVSKSGQVIFEARSICIHY). Residues 299-319 (VTTWFIIDLIAALPFDLLYAF) form a helical membrane-spanning segment. Asparagine 320 is a glycosylation site (N-linked (GlcNAc...) asparagine). Over 320–327 (NVTVVSLV) the chain is Extracellular. A helical; Voltage-sensor transmembrane segment spans residues 328–348 (HLLKTVRLLRLLRLLQKLDRY). Topologically, residues 349–357 (SQHSTIVLT) are cytoplasmic. Residues 358-378 (LLMSMFALLAHWMACIWYVIG) form a helical membrane-spanning segment. The Extracellular portion of the chain corresponds to 379–419 (KMEREDNSLLKWEVGWLHELGKRLESPYYGNNTLGGPSIRS). Asparagine 409 is a glycosylation site (N-linked (GlcNAc...) asparagine). Positions 420-440 (AYIAALYFTLSSLTSVGFGNV) form an intramembrane region, pore-forming. The short motif at 434–439 (SVGFGN) is the Selectivity filter element. Over 441 to 448 (SANTDAEK) the chain is Extracellular. Residues 449-469 (IFSICTMLIGALMHALVFGNV) traverse the membrane as a helical segment. The Cytoplasmic portion of the chain corresponds to 470 to 1107 (TAIIQRMYSR…EVKDNKAINV (638 aa)). The cNMP-binding domain stretch occupies residues 551–668 (LFECASRGCL…HKFVEDIQHD (118 aa)). Over residues 686 to 702 (SNKSMVSQSEPKGNGNI) the composition is skewed to polar residues. Disordered stretches follow at residues 686-742 (SNKS…NKKV), 764-791 (HSPI…KRKE), 818-847 (EDGN…PPLG), and 961-989 (VDPS…YHSP). Positions 710–724 (VEDEEEEEEGEEEEA) are enriched in acidic residues. The segment covering 961–972 (VDPSSVGSSPQR) has biased composition (polar residues).

The protein belongs to the potassium channel family. H (Eag) (TC 1.A.1.20) subfamily. Kv12.1/KCNH8 sub-subfamily. As to quaternary structure, the potassium channel is probably composed of a homo- or heterotetrameric complex of pore-forming alpha subunits that can associate with modulating beta subunits. As to expression, primarily expressed in the nervous system.

Its subcellular location is the membrane. The catalysed reaction is K(+)(in) = K(+)(out). Functionally, pore-forming (alpha) subunit of a voltage-gated delayed rectifier potassium channel that mediates outward-rectifying potassium currents. Elicits a slowly activating, non-inactivating and slowly deactivation outwards potassium current at depolarizating voltages from -30 mV to +50mV. Shows no obvious change in the activation rate from different holding potentials. Activation is strongly dependent on the pH of the external solution. The sequence is that of Voltage-gated delayed rectifier potassium channel KCNH8 from Homo sapiens (Human).